The primary structure comprises 144 residues: MAFDKLGRFFGISEDDEMNEVPYTESEEQQEEIPQTQKNERRANVVSINSGVSATSKIVLYEPRVYSDAKEVAQNLLNNKAVIINFARMDDEQARRIVDFITGTVYALNGEIQRVGDKIFLATPPKFETDGKIAELVEKKDKMD.

The segment covering 14 to 31 (EDDEMNEVPYTESEEQQE) has biased composition (acidic residues). Positions 14-41 (EDDEMNEVPYTESEEQQEEIPQTQKNER) are disordered.

It belongs to the SepF family. In terms of assembly, homodimer. Interacts with FtsZ.

Its subcellular location is the cytoplasm. Its function is as follows. Cell division protein that is part of the divisome complex and is recruited early to the Z-ring. Probably stimulates Z-ring formation, perhaps through the cross-linking of FtsZ protofilaments. Its function overlaps with FtsA. The chain is Cell division protein SepF from Lactobacillus johnsonii (strain CNCM I-12250 / La1 / NCC 533).